The sequence spans 1749 residues: Intraflagellar transport protein 172 homolog (1749 aa).

At methionine 1 the chain carries N-acetylmethionine. Residue lysine 4 forms a Glycyl lysine isopeptide (Lys-Gly) (interchain with G-Cter in SUMO1) linkage. WD repeat units follow at residues 14–53, 64–103, 110–148, 150–191, 195–233, 238–278, 284–323, 483–520, and 521–559; these read DGAA…RDKF, RKSY…GDKK, IQTS…SSTI, GTES…ESQG, NHPC…QTFD, PQER…WEEA, TNLY…SIYK, SHES…CSKT, and MILN…ERVT. A TPR 1 repeat occupies 593–624; that stretch reads DEGLIEFGTAIDDGNYIRATAFLETLEMTPET. Omega-N-methylarginine is present on arginine 672. TPR repeat units lie at residues 692–725, 809–842, 854–887, 912–945, 947–970, 971–1004, 1042–1075, 1142–1175, 1276–1309, 1345–1378, 1411–1445, 1447–1477, and 1574–1607; these read EKNY…DECI, GELY…MKAV, VKLE…IKAI, SKYY…KDAI, MYTQ…PEDV, SVLY…DLAI, EGRL…EEAY, PEVH…KEAV, VEGF…GNSG, IGKH…NKAK, GVDV…LHKY, ALYA…NPQN, and DKAF…TDAI.

Belongs to the IFT172 family. Interacts with IFT88. Interacts with IFT57. Interacts with RABL2/RABL2A; binds preferentially to GDP-bound RABL2.

The protein localises to the cell projection. It is found in the cilium. Its function is as follows. Required for the maintenance and formation of cilia. Plays an indirect role in hedgehog (Hh) signaling, cilia being required for all activity of the hedgehog pathway. The sequence is that of Intraflagellar transport protein 172 homolog (IFT172) from Homo sapiens (Human).